Reading from the N-terminus, the 675-residue chain is Potassium-transporting ATPase ATP-binding subunit 2 (675 aa).

4 helical membrane passes run 34-54, 65-85, 216-236, and 245-265; these read IMFV…FPDI, LITI…SEAF, IALF…IVTL, and LILP…TTIG. The active-site 4-aspartylphosphate intermediate is the Asp-304. Residues Asp-341, Glu-345, 372–379, and Lys-390 each bind ATP; that span reads FTAETRMS. Asp-513 and Asp-517 together coordinate Mg(2+). 3 helical membrane-spanning segments follow: residues 569–591, 611–631, and 644–664; these read ALTT…ALMM, AIIS…PIAM, and IFIN…FLGI.

Belongs to the cation transport ATPase (P-type) (TC 3.A.3) family. Type IA subfamily. In terms of assembly, the system is composed of three essential subunits: KdpA, KdpB and KdpC.

It localises to the cell membrane. The catalysed reaction is K(+)(out) + ATP + H2O = K(+)(in) + ADP + phosphate + H(+). Part of the high-affinity ATP-driven potassium transport (or Kdp) system, which catalyzes the hydrolysis of ATP coupled with the electrogenic transport of potassium into the cytoplasm. This subunit is responsible for energy coupling to the transport system and for the release of the potassium ions to the cytoplasm. This Staphylococcus aureus (strain Mu50 / ATCC 700699) protein is Potassium-transporting ATPase ATP-binding subunit 2.